The sequence spans 460 residues: tRNA modification GTPase MnmE (460 aa).

Positions 29, 86, and 126 each coordinate (6S)-5-formyl-5,6,7,8-tetrahydrofolate. A TrmE-type G domain is found at 222–383 (GMRVVIAGRP…LAEHLKECMG (162 aa)). Asparagine 232 provides a ligand contact to K(+). Residues 232-237 (NAGKSS), 251-257 (TAIAGTT), 276-279 (DTAG), and 341-344 (NKAD) contribute to the GTP site. Mg(2+) is bound at residue serine 236. Residues threonine 251, isoleucine 253, and threonine 256 each contribute to the K(+) site. Threonine 257 is a binding site for Mg(2+). Lysine 460 lines the (6S)-5-formyl-5,6,7,8-tetrahydrofolate pocket.

Belongs to the TRAFAC class TrmE-Era-EngA-EngB-Septin-like GTPase superfamily. TrmE GTPase family. As to quaternary structure, homodimer. Heterotetramer of two MnmE and two MnmG subunits. Requires K(+) as cofactor.

It is found in the cytoplasm. Its function is as follows. Exhibits a very high intrinsic GTPase hydrolysis rate. Involved in the addition of a carboxymethylaminomethyl (cmnm) group at the wobble position (U34) of certain tRNAs, forming tRNA-cmnm(5)s(2)U34. The sequence is that of tRNA modification GTPase MnmE from Pseudoalteromonas atlantica (strain T6c / ATCC BAA-1087).